A 199-amino-acid polypeptide reads, in one-letter code: ATP-dependent Clp protease proteolytic subunit (199 aa).

Serine 97 serves as the catalytic Nucleophile. Residue histidine 122 is part of the active site.

The protein belongs to the peptidase S14 family. As to quaternary structure, fourteen ClpP subunits assemble into 2 heptameric rings which stack back to back to give a disk-like structure with a central cavity, resembling the structure of eukaryotic proteasomes.

It is found in the cytoplasm. The catalysed reaction is Hydrolysis of proteins to small peptides in the presence of ATP and magnesium. alpha-casein is the usual test substrate. In the absence of ATP, only oligopeptides shorter than five residues are hydrolyzed (such as succinyl-Leu-Tyr-|-NHMec, and Leu-Tyr-Leu-|-Tyr-Trp, in which cleavage of the -Tyr-|-Leu- and -Tyr-|-Trp bonds also occurs).. Functionally, cleaves peptides in various proteins in a process that requires ATP hydrolysis. Has a chymotrypsin-like activity. Plays a major role in the degradation of misfolded proteins. The sequence is that of ATP-dependent Clp protease proteolytic subunit from Geobacter sulfurreducens (strain ATCC 51573 / DSM 12127 / PCA).